The following is a 351-amino-acid chain: MTYAIVVADATKRYGDFVALDHVDFVVPTGSLTALLGPSGSGKSTLLRTIAGLDQPDTGTITINGRDVTRVPPQRRGIGFVFQHYAAFKHLTVRDNVAFGLKIRKRPKAEIKAKVDNLLQVVGLSGFQSRYPNQLSGGQRQRMALARALAVDPEVLLLDEPFGALDAKVREELRAWLRRLHDEVHVTTVLVTHDQAEALDVADRIAVLHKGRIEQVGSPTDVYDAPANAFVMSFLGAVSTLNGSLVRPHDIRVGRTPNMAVAAADGTAGSTGVLRAVVDRVVVLGFEVRVELTSAATGGAFTAQITRGDAEALALREGDTVYVRATRVPPIAGGVSGVDDAGVERVKVTST.

Residues 5 to 235 (IVVADATKRY…PANAFVMSFL (231 aa)) enclose the ABC transporter domain. An ATP-binding site is contributed by 37-44 (GPSGSGKS).

It belongs to the ABC transporter superfamily. Sulfate/tungstate importer (TC 3.A.1.6) family. As to quaternary structure, the complex is composed of two ATP-binding proteins (CysA), two transmembrane proteins (CysT and CysW) and a solute-binding protein (CysP).

The protein localises to the cell membrane. It carries out the reaction sulfate(out) + ATP + H2O = sulfate(in) + ADP + phosphate + H(+). The enzyme catalyses thiosulfate(out) + ATP + H2O = thiosulfate(in) + ADP + phosphate + H(+). Functionally, part of the ABC transporter complex CysAWTP involved in sulfate/thiosulfate import. Responsible for energy coupling to the transport system. This is Sulfate/thiosulfate import ATP-binding protein CysA from Mycobacterium bovis (strain ATCC BAA-935 / AF2122/97).